Consider the following 521-residue polypeptide: Importin subunit alpha-3 (521 aa).

Ala2 carries the N-acetylalanine modification. An IBB domain is found at 2–58 (ADNEKLDNQRLKNFKNKGRDLETMRRQRNEVVVELRKNKRDEHLLKRRNVPHEDICE). A Nuclear localization signal motif is present at residues 43 to 52 (EHLLKRRNVP). Ser60 is modified (phosphoserine). The ARM 1; truncated repeat unit spans residues 66–106 (YRVQNTSLEAIVQNASSDNQGIQLSAVQAARKLLSSDRNPP). ARM repeat units lie at residues 107–149 (IDDL…TSEQ), 150–194 (TQAV…CRDY), 195–233 (VISL…HKDP), 234–278 (PPPM…EQIQ), 279–318 (MVID…TDEQ), 319–360 (TQVV…NQQQ), 361–400 (VQAV…ISGR), and 401–443 (KDQV…KMAE). The NLS binding site (major) stretch occupies residues 137 to 229 (WALTNIASGT…VTWVMVNLCR (93 aa)). The NLS binding site (minor) stretch occupies residues 306-394 (RAVGNIVTGT…QKEAAWAISN (89 aa)). Residues 447-485 (ETIGNLIEECGGLEKIEQLQNHENEDIYKLAYEIIDQFF) form an ARM 10; atypical repeat.

Belongs to the importin alpha family. As to quaternary structure, forms a complex with importin subunit beta-1 (KPNB1). Interacts with SNAI1. Interacts with TALDO1 isoform 1. Interacts with CYB1. (Microbial infection) Interacts with MERS virus protein OF4b; this interaction prevents the translocation of NF-kappa-B complex to the nucleus. In terms of assembly, (Microbial infection) Interacts with human adenovirus 5 E1A protein; this interaction allows E1A import into the host nucleus. As to quaternary structure, (Microbial infection) Interacts with Chikungunya virus capsid protein; this interaction allows the nuclear import of the viral capsid protein. In terms of tissue distribution, highly expressed in testis, ovary, small intestine, heart, skeletal muscle, lung and pancreas, but barely detectable in kidney, thymus, colon and peripheral blood leukocytes.

The protein localises to the cytoplasm. The protein resides in the nucleus. In terms of biological role, functions in nuclear protein import as an adapter protein for nuclear receptor KPNB1. Binds specifically and directly to substrates containing either a simple or bipartite NLS motif. Docking of the importin/substrate complex to the nuclear pore complex (NPC) is mediated by KPNB1 through binding to nucleoporin FxFG repeats and the complex is subsequently translocated through the pore by an energy requiring, Ran-dependent mechanism. At the nucleoplasmic side of the NPC, Ran binds to importin-beta and the three components separate and importin-alpha and -beta are re-exported from the nucleus to the cytoplasm where GTP hydrolysis releases Ran from importin. The directionality of nuclear import is thought to be conferred by an asymmetric distribution of the GTP- and GDP-bound forms of Ran between the cytoplasm and nucleus. Mediates nuclear import of AARS1, MRTFA and RANBP3. (Microbial infection) In vitro, mediates the nuclear import of human cytomegalovirus UL84 by recognizing a non-classical NLS. In vitro, mediates the nuclear import of human cytomegalovirus UL84 by recognizing a non-classical NLS. This chain is Importin subunit alpha-3, found in Homo sapiens (Human).